We begin with the raw amino-acid sequence, 425 residues long: Adenylosuccinate synthetase (425 aa).

GTP is bound by residues 12-18 (GDEGKGK) and 40-42 (GHT). The active-site Proton acceptor is the aspartate 13. Residues aspartate 13 and glycine 40 each contribute to the Mg(2+) site. IMP contacts are provided by residues 13 to 16 (DEGK), 38 to 41 (NAGH), threonine 127, arginine 141, glutamine 222, threonine 237, and arginine 301. Residue histidine 41 is the Proton donor of the active site. Substrate is bound at residue 297 to 303 (AVTGRPR). GTP-binding positions include arginine 303, 329–331 (KID), and 411–413 (SVG).

This sequence belongs to the adenylosuccinate synthetase family. As to quaternary structure, homodimer. Requires Mg(2+) as cofactor.

Its subcellular location is the cytoplasm. It carries out the reaction IMP + L-aspartate + GTP = N(6)-(1,2-dicarboxyethyl)-AMP + GDP + phosphate + 2 H(+). The protein operates within purine metabolism; AMP biosynthesis via de novo pathway; AMP from IMP: step 1/2. In terms of biological role, plays an important role in the de novo pathway of purine nucleotide biosynthesis. Catalyzes the first committed step in the biosynthesis of AMP from IMP. This chain is Adenylosuccinate synthetase, found in Fusobacterium nucleatum.